We begin with the raw amino-acid sequence, 146 residues long: Ribonuclease P protein component (146 aa).

This sequence belongs to the RnpA family. In terms of assembly, consists of a catalytic RNA component (M1 or rnpB) and a protein subunit.

It carries out the reaction Endonucleolytic cleavage of RNA, removing 5'-extranucleotides from tRNA precursor.. Its function is as follows. RNaseP catalyzes the removal of the 5'-leader sequence from pre-tRNA to produce the mature 5'-terminus. It can also cleave other RNA substrates such as 4.5S RNA. The protein component plays an auxiliary but essential role in vivo by binding to the 5'-leader sequence and broadening the substrate specificity of the ribozyme. This is Ribonuclease P protein component from Helicobacter hepaticus (strain ATCC 51449 / 3B1).